Reading from the N-terminus, the 416-residue chain is MSSNCTSTTAVAVAPLSASKTKTKKKHFVCQKVKLFRASEPILSVLMWGVNHTINELSNVPVPVMLMPDDFKAYSKIKVDNHLFNKENLPSRFKFKEYCPMVFRNLRERFGIDDQDYQNSVTRSAPINSDSQGRCGTRFLTTYDRRFVIKTVSSEDVAEMHNILKKYHQFIVECHGNTLLPQFLGMYRLTVDGVETYMVVTRNVFSHRLTVHRKYDLKGSTVAREASDKEKAKDLPTFKDNDFLNEGQKLHVGEESKKNFLEKLKRDVEFLAQLKIMDYSLLVGIHDVDRAEQEEMEVEERAEDEECENDGVGGNLLCSYGTPPDSPGNLLSFPRFFGPGEFDPSVDVYAMKSHESSPKKEVYFMAIIDILTPYDTKKKAAHAAKTVKHGAGAEISTVNPEQYSKRFNEFMSNILT.

N-acetylserine is present on serine 2. A Phosphothreonine modification is found at threonine 8. Serine 19 carries the phosphoserine modification. The 378-residue stretch at 38-415 (ASEPILSVLM…RFNEFMSNIL (378 aa)) folds into the PIPK domain. Positions 64-70 (VMLMPDD) are required for interaction with PIP5K1A. 2 positions are modified to N6-acetyllysine: lysine 94 and lysine 150. Residues 202 to 204 (RNV) and lysine 214 contribute to the ATP site. Residues 203-204 (NV) and lysine 214 each bind GTP. Threonine 322 bears the Phosphothreonine mark. At serine 326 the chain carries Phosphoserine. Aspartate 369 serves as a coordination point for GTP.

Homodimer. Binds TNFRSF1A. Interacts with PIP4K2A; the interaction suppresses ubiquitination by the SPOP/CUL3 complex. In terms of processing, ubiquitinated by the SPOP/CUL3 complex. Ubiquitination is stimulated by PtdIns5P levels. Phosphorylated on serine residues. As to expression, highly expressed in brain, heart, pancreas, skeletal muscle and kidney. Detected at lower levels in placenta, lung and liver.

The protein resides in the endoplasmic reticulum membrane. The protein localises to the cell membrane. It is found in the nucleus. Its subcellular location is the cytoplasm. It carries out the reaction a 1,2-diacyl-sn-glycero-3-phospho-(1D-myo-inositol-5-phosphate) + ATP = a 1,2-diacyl-sn-glycero-3-phospho-(1D-myo-inositol-4,5-bisphosphate) + ADP + H(+). The catalysed reaction is 1,2-dihexadecanoyl-sn-glycero-3-phospho-(1D-myo-inositol-5-phosphate) + ATP = 1,2-dihexadecanoyl-sn-glycero-3-phospho-(1D-myo-inositol-4,5-bisphosphate) + ADP + H(+). The enzyme catalyses 1,2-dihexadecanoyl-sn-glycero-3-phospho-(1D-myo-inositol-5-phosphate) + GTP = 1,2-dihexadecanoyl-sn-glycero-3-phospho-(1D-myo-inositol-4,5-bisphosphate) + GDP + H(+). Functionally, participates in the biosynthesis of phosphatidylinositol 4,5-bisphosphate. Preferentially utilizes GTP, rather than ATP, for PI(5)P phosphorylation and its activity reflects changes in direct proportion to the physiological GTP concentration. Its GTP-sensing activity is critical for metabolic adaptation. PIP4Ks negatively regulate insulin signaling through a catalytic-independent mechanism. They interact with PIP5Ks and suppress PIP5K-mediated PtdIns(4,5)P2 synthesis and insulin-dependent conversion to PtdIns(3,4,5)P3. The protein is Phosphatidylinositol 5-phosphate 4-kinase type-2 beta of Homo sapiens (Human).